A 28-amino-acid polypeptide reads, in one-letter code: Heat shock protein 81 (28 aa).

ATP contacts are provided by N5 and D21.

It belongs to the heat shock protein 90 family. In terms of assembly, homodimer.

It localises to the cytoplasm. Functionally, putative molecular chaperone that may promote the maturation, structural maintenance and proper regulation of specific target proteins. The polypeptide is Heat shock protein 81 (Pseudotsuga menziesii (Douglas-fir)).